Here is a 144-residue protein sequence, read N- to C-terminus: Large ribosomal subunit protein uL16 (144 aa).

Basic residues predominate over residues 1–19; it reads MLLPKRVKYRRQHRPKTTG. Residues 1–23 form a disordered region; the sequence is MLLPKRVKYRRQHRPKTTGRSKG.

It belongs to the universal ribosomal protein uL16 family. As to quaternary structure, part of the 50S ribosomal subunit.

Functionally, binds 23S rRNA and is also seen to make contacts with the A and possibly P site tRNAs. In Staphylococcus saprophyticus subsp. saprophyticus (strain ATCC 15305 / DSM 20229 / NCIMB 8711 / NCTC 7292 / S-41), this protein is Large ribosomal subunit protein uL16.